A 316-amino-acid polypeptide reads, in one-letter code: MYSKILGTGSYLPSQVRTNADLEKMVETSDEWIVARTGIRERRIAADNETVADMAFFAAQNAINMAGIDKHDIDMIIVATTSASHTFPSAACQVQGKLGIKGCPAFDLAAACSGFMYALSIADQHVKSGMCKHVLVIGADALSKTCDPTDRSTIILFGDGAGAVVVGASNEPGILSTHIHADGEFGDLLSLEVPVRGGDSDKWLHMAGNEVFKVAVTQLSKLVVDTLKANNMHKSELDWLVPHQANYRIISATAKKLSMSLDQVVITLDRHGNTSAATVPTALDEAVRDGRIQRGQMLLLEAFGGGFTWGSALVKF.

Residues Cys-112 and His-243 contribute to the active site. Residues 244–248 form an ACP-binding region; the sequence is QANYR. Asn-273 is a catalytic residue.

It belongs to the thiolase-like superfamily. FabH family. Homodimer.

Its subcellular location is the cytoplasm. The enzyme catalyses malonyl-[ACP] + acetyl-CoA + H(+) = 3-oxobutanoyl-[ACP] + CO2 + CoA. Its pathway is lipid metabolism; fatty acid biosynthesis. Catalyzes the condensation reaction of fatty acid synthesis by the addition to an acyl acceptor of two carbons from malonyl-ACP. Catalyzes the first condensation reaction which initiates fatty acid synthesis and may therefore play a role in governing the total rate of fatty acid production. Possesses both acetoacetyl-ACP synthase and acetyl transacylase activities. Its substrate specificity determines the biosynthesis of branched-chain and/or straight-chain of fatty acids. The sequence is that of Beta-ketoacyl-[acyl-carrier-protein] synthase III 1 from Vibrio cholerae serotype O1 (strain ATCC 39315 / El Tor Inaba N16961).